The chain runs to 454 residues: tRNA modification GTPase MnmE (454 aa).

Residues Arg-23, Glu-80, and Lys-120 each coordinate (6S)-5-formyl-5,6,7,8-tetrahydrofolate. The 162-residue stretch at 216 to 377 (GMKVVIAGRP…LRDHLKQSMG (162 aa)) folds into the TrmE-type G domain. Asn-226 lines the K(+) pocket. Residues 226 to 231 (NAGKSS), 245 to 251 (TAIAGTT), 270 to 273 (DTAG), 335 to 338 (NKAD), and 358 to 360 (SAR) contribute to the GTP site. Ser-230 contributes to the Mg(2+) binding site. K(+) contacts are provided by Thr-245, Ile-247, and Thr-250. Thr-251 provides a ligand contact to Mg(2+). Lys-454 serves as a coordination point for (6S)-5-formyl-5,6,7,8-tetrahydrofolate.

The protein belongs to the TRAFAC class TrmE-Era-EngA-EngB-Septin-like GTPase superfamily. TrmE GTPase family. As to quaternary structure, homodimer. Heterotetramer of two MnmE and two MnmG subunits. The cofactor is K(+).

It localises to the cytoplasm. Its function is as follows. Exhibits a very high intrinsic GTPase hydrolysis rate. Involved in the addition of a carboxymethylaminomethyl (cmnm) group at the wobble position (U34) of certain tRNAs, forming tRNA-cmnm(5)s(2)U34. In Pectobacterium atrosepticum (strain SCRI 1043 / ATCC BAA-672) (Erwinia carotovora subsp. atroseptica), this protein is tRNA modification GTPase MnmE.